Here is a 344-residue protein sequence, read N- to C-terminus: Glycerol-3-phosphate dehydrogenase [NAD(P)+] (344 aa).

NADPH-binding residues include Ser-23, Trp-24, Arg-44, and Lys-118. Sn-glycerol 3-phosphate-binding residues include Lys-118, Gly-147, and Thr-149. Ala-151 provides a ligand contact to NADPH. Lys-202, Asp-255, Ser-265, Arg-266, and Asn-267 together coordinate sn-glycerol 3-phosphate. Lys-202 acts as the Proton acceptor in catalysis. Arg-266 serves as a coordination point for NADPH. Glu-292 serves as a coordination point for NADPH.

The protein belongs to the NAD-dependent glycerol-3-phosphate dehydrogenase family.

Its subcellular location is the cytoplasm. It catalyses the reaction sn-glycerol 3-phosphate + NAD(+) = dihydroxyacetone phosphate + NADH + H(+). The enzyme catalyses sn-glycerol 3-phosphate + NADP(+) = dihydroxyacetone phosphate + NADPH + H(+). It participates in membrane lipid metabolism; glycerophospholipid metabolism. Its function is as follows. Catalyzes the reduction of the glycolytic intermediate dihydroxyacetone phosphate (DHAP) to sn-glycerol 3-phosphate (G3P), the key precursor for phospholipid synthesis. The chain is Glycerol-3-phosphate dehydrogenase [NAD(P)+] from Nitrosococcus oceani (strain ATCC 19707 / BCRC 17464 / JCM 30415 / NCIMB 11848 / C-107).